Reading from the N-terminus, the 208-residue chain is Uracil phosphoribosyltransferase (208 aa).

Residues Arg78, Arg103, and 130–138 (DPMLATGVS) contribute to the 5-phospho-alpha-D-ribose 1-diphosphate site. Uracil contacts are provided by residues Ile193 and 198–200 (GDA). Asp199 contributes to the 5-phospho-alpha-D-ribose 1-diphosphate binding site.

The protein belongs to the UPRTase family. It depends on Mg(2+) as a cofactor.

The enzyme catalyses UMP + diphosphate = 5-phospho-alpha-D-ribose 1-diphosphate + uracil. Its pathway is pyrimidine metabolism; UMP biosynthesis via salvage pathway; UMP from uracil: step 1/1. With respect to regulation, allosterically activated by GTP. In terms of biological role, catalyzes the conversion of uracil and 5-phospho-alpha-D-ribose 1-diphosphate (PRPP) to UMP and diphosphate. This chain is Uracil phosphoribosyltransferase, found in Thermosipho melanesiensis (strain DSM 12029 / CIP 104789 / BI429).